The chain runs to 259 residues: Cytochrome c oxidase subunit 3 (259 aa).

7 helical membrane passes run 13 to 33 (PWPL…TSWF), 36 to 56 (HGFI…FQWW), 80 to 100 (GMVL…WAYF), 125 to 145 (FQIP…VTWA), 154 to 174 (HAEA…FTLL), 195 to 215 (FFVA…FLLI), and 237 to 257 (AWYW…IYWW).

The protein belongs to the cytochrome c oxidase subunit 3 family. As to quaternary structure, component of the cytochrome c oxidase (complex IV, CIV), a multisubunit enzyme composed of a catalytic core of 3 subunits and several supernumerary subunits. The complex exists as a monomer or a dimer and forms supercomplexes (SCs) in the inner mitochondrial membrane with ubiquinol-cytochrome c oxidoreductase (cytochrome b-c1 complex, complex III, CIII).

Its subcellular location is the mitochondrion inner membrane. The catalysed reaction is 4 Fe(II)-[cytochrome c] + O2 + 8 H(+)(in) = 4 Fe(III)-[cytochrome c] + 2 H2O + 4 H(+)(out). Functionally, component of the cytochrome c oxidase, the last enzyme in the mitochondrial electron transport chain which drives oxidative phosphorylation. The respiratory chain contains 3 multisubunit complexes succinate dehydrogenase (complex II, CII), ubiquinol-cytochrome c oxidoreductase (cytochrome b-c1 complex, complex III, CIII) and cytochrome c oxidase (complex IV, CIV), that cooperate to transfer electrons derived from NADH and succinate to molecular oxygen, creating an electrochemical gradient over the inner membrane that drives transmembrane transport and the ATP synthase. Cytochrome c oxidase is the component of the respiratory chain that catalyzes the reduction of oxygen to water. Electrons originating from reduced cytochrome c in the intermembrane space (IMS) are transferred via the dinuclear copper A center (CU(A)) of subunit 2 and heme A of subunit 1 to the active site in subunit 1, a binuclear center (BNC) formed by heme A3 and copper B (CU(B)). The BNC reduces molecular oxygen to 2 water molecules using 4 electrons from cytochrome c in the IMS and 4 protons from the mitochondrial matrix. The protein is Cytochrome c oxidase subunit 3 (COIII) of Heterololigo bleekeri (Spear squid).